An 86-amino-acid chain; its full sequence is Small ribosomal subunit protein uS17 (86 aa).

Belongs to the universal ribosomal protein uS17 family. Part of the 30S ribosomal subunit.

In terms of biological role, one of the primary rRNA binding proteins, it binds specifically to the 5'-end of 16S ribosomal RNA. In Streptococcus equi subsp. equi (strain 4047), this protein is Small ribosomal subunit protein uS17.